A 497-amino-acid polypeptide reads, in one-letter code: Kynureninase (497 aa).

Positions 59–86 are disordered; the sequence is GRLPAYPPNHAKPGETATAQNGTSNTND. A compositionally biased stretch (polar residues) spans 75–86; the sequence is ATAQNGTSNTND. Pyridoxal 5'-phosphate is bound by residues Leu-166, Thr-167, 194–197, Asp-278, His-281, and Tyr-303; that span reads FPSD. The residue at position 304 (Lys-304) is an N6-(pyridoxal phosphate)lysine. Residues Trp-337 and Asn-365 each coordinate pyridoxal 5'-phosphate.

This sequence belongs to the kynureninase family. In terms of assembly, homodimer. Requires pyridoxal 5'-phosphate as cofactor.

The protein localises to the cytoplasm. It catalyses the reaction L-kynurenine + H2O = anthranilate + L-alanine + H(+). It carries out the reaction 3-hydroxy-L-kynurenine + H2O = 3-hydroxyanthranilate + L-alanine + H(+). Its pathway is amino-acid degradation; L-kynurenine degradation; L-alanine and anthranilate from L-kynurenine: step 1/1. It functions in the pathway cofactor biosynthesis; NAD(+) biosynthesis; quinolinate from L-kynurenine: step 2/3. Its function is as follows. Catalyzes the cleavage of L-kynurenine (L-Kyn) and L-3-hydroxykynurenine (L-3OHKyn) into anthranilic acid (AA) and 3-hydroxyanthranilic acid (3-OHAA), respectively. The chain is Kynureninase from Pyricularia oryzae (strain 70-15 / ATCC MYA-4617 / FGSC 8958) (Rice blast fungus).